A 162-amino-acid chain; its full sequence is Phospholipase A and acyltransferase 3 (162 aa).

At 1–133 (MLAPIPEPKP…VPRSDQVRDA (133 aa)) the chain is on the cytoplasmic side. In terms of domain architecture, LRAT spans 13-129 (LIEIFRPMYR…LRYGVPRSDQ (117 aa)). Catalysis depends on residues His23 and His35. Residue Cys113 is the Acyl-thioester intermediate of the active site. A helical membrane pass occupies residues 134–154 (VKAVGIAGVGLAALGLVGVML). Residues 155 to 162 (SRNKKQKQ) are Lumenal-facing.

The protein belongs to the H-rev107 family. As to quaternary structure, interacts with PPP2R1A; this interaction might decrease PP2A activity. Ubiquitously expressed in normal tissues but down-regulated in primary carcinomas or in many cell lines derived from tumors. Highly expressed in white adipose tissue and in adipocytes. Expressed at lower levels in brown adipose tissue.

The protein localises to the cell membrane. It is found in the cytoplasm. It localises to the cytosol. The protein resides in the perinuclear region. Its subcellular location is the peroxisome membrane. The protein localises to the mitochondrion membrane. It is found in the nucleus envelope. It localises to the lysosome membrane. The protein resides in the endoplasmic reticulum membrane. The catalysed reaction is a 1,2-diacyl-sn-glycero-3-phosphocholine + H2O = a 1-acyl-sn-glycero-3-phosphocholine + a fatty acid + H(+). The enzyme catalyses a 1,2-diacyl-sn-glycero-3-phosphocholine + H2O = a 2-acyl-sn-glycero-3-phosphocholine + a fatty acid + H(+). It carries out the reaction 1,2-dihexadecanoyl-sn-glycero-3-phosphocholine + H2O = 1-hexadecanoyl-sn-glycero-3-phosphocholine + hexadecanoate + H(+). It catalyses the reaction 1,2-dihexadecanoyl-sn-glycero-3-phosphocholine + H2O = 2-hexadecanoyl-sn-glycero-3-phosphocholine + hexadecanoate + H(+). The catalysed reaction is 1-hexadecanoyl-2-(9Z-octadecenoyl)-sn-glycero-3-phosphocholine + H2O = 2-(9Z-octadecenoyl)-sn-glycero-3-phosphocholine + hexadecanoate + H(+). The enzyme catalyses 1-hexadecanoyl-2-(9Z-octadecenoyl)-sn-glycero-3-phosphocholine + H2O = 1-hexadecanoyl-sn-glycero-3-phosphocholine + (9Z)-octadecenoate + H(+). It carries out the reaction 1-hexadecanoyl-2-(5Z,8Z,11Z,14Z-eicosatetraenoyl)-sn-glycero-3-phosphocholine + H2O = 1-hexadecanoyl-sn-glycero-3-phosphocholine + (5Z,8Z,11Z,14Z)-eicosatetraenoate + H(+). It catalyses the reaction 1-hexadecanoyl-2-(5Z,8Z,11Z,14Z-eicosatetraenoyl)-sn-glycero-3-phosphocholine + H2O = 2-(5Z,8Z,11Z,14Z)-eicosatetraenoyl-sn-glycero-3-phosphocholine + hexadecanoate + H(+). The catalysed reaction is 1-hexadecanoyl-2-(9Z,12Z-octadecadienoyl)-sn-glycero-3-phosphoethanolamine + H2O = 1-hexadecanoyl-sn-glycero-3-phosphoethanolamine + (9Z,12Z)-octadecadienoate + H(+). The enzyme catalyses 1-hexadecanoyl-2-(9Z,12Z-octadecadienoyl)-sn-glycero-3-phosphoethanolamine + H2O = 2-(9Z,12Z)-octadecadienoyl-sn-glycero-3-phosphoethanolamine + hexadecanoate + H(+). It carries out the reaction 1-hexadecanoyl-2-(5Z,8Z,11Z,14Z-eicosatetraenoyl)-sn-glycero-3-phosphoethanolamine + H2O = 1-hexadecanoyl-sn-glycero-3-phosphoethanolamine + (5Z,8Z,11Z,14Z)-eicosatetraenoate + H(+). It catalyses the reaction 1-hexadecanoyl-2-(5Z,8Z,11Z,14Z-eicosatetraenoyl)-sn-glycero-3-phosphoethanolamine + H2O = 2-(5Z,8Z,11Z,14Z)-eicosatetraenoyl-sn-glycero-3-phosphoethanolamine + hexadecanoate + H(+). The catalysed reaction is 1-hexanoyl-2-acyl-sn-glycero-3-phosphocholine + H2O = hexanoate + a 2-acyl-sn-glycero-3-phosphocholine + H(+). The enzyme catalyses 1-hexanoyl-2-acyl-sn-glycero-3-phosphocholine + H2O = 1-hexanoyl-sn-glycero-3-phosphocholine + a fatty acid + H(+). It carries out the reaction 1,2-diheptadecanoyl-sn-glycero-3-phosphoethanolamine + 1-(9Z-octadecenoyl)-2-hexadecanoyl-sn-glycero-3-phosphocholine = 1,2-diheptadecanoyl-sn-glycero-3-phospho-N-hexadecanoyl-ethanolamine + 1-(9Z-octadecenoyl)-sn-glycero-3-phosphocholine + H(+). It catalyses the reaction 1,2-diheptadecanoyl-sn-glycero-3-phosphoethanolamine + 1-(9Z-octadecenoyl)-2-hexadecanoyl-sn-glycero-3-phosphocholine = 1,2-diheptadecanoyl-sn-glycero-3-phospho-N-(9Z-octadecenoyl)-ethanolamine + 2-hexadecanoyl-sn-glycero-3-phosphocholine + H(+). The catalysed reaction is 1,2-dihexanoyl-sn-glycero-3-phosphoethanolamine + 2-heptanoyl-sn-glycero-3-phosphocholine = hexanoyl-sn-glycero-3-phosphoethanolamine + 1-hexanoyl-2-heptanoyl-sn-glycero-3-phosphocholine. The enzyme catalyses 1-hexadecanoyl-2-octadecanoyl-sn-glycero-3-phosphocholine + H2O = octadecanoate + 1-hexadecanoyl-sn-glycero-3-phosphocholine + H(+). It carries out the reaction 1-hexadecanoyl-2-octadecanoyl-sn-glycero-3-phosphocholine + H2O = 2-octadecanoyl-sn-glycero-3-phosphocholine + hexadecanoate + H(+). It catalyses the reaction 1-octadecanoyl-2-hexadecanoyl-sn-glycero-3-phosphocholine + H2O = 1-octadecanoyl-sn-glycero-3-phosphocholine + hexadecanoate + H(+). The catalysed reaction is 1-octadecanoyl-2-hexadecanoyl-sn-glycero-3-phosphocholine + H2O = 2-hexadecanoyl-sn-glycero-3-phosphocholine + octadecanoate + H(+). The enzyme catalyses 1-hexadecanoyl-2-(9Z,12Z-octadecadienoyl)-sn-glycero-3-phosphocholine + H2O = (9Z,12Z)-octadecadienoate + 1-hexadecanoyl-sn-glycero-3-phosphocholine + H(+). It carries out the reaction 1-hexadecanoyl-2-(9Z,12Z-octadecadienoyl)-sn-glycero-3-phosphocholine + H2O = 2-(9Z,12Z-octadecadienoyl)-sn-glycero-3-phosphocholine + hexadecanoate + H(+). It catalyses the reaction 1,2-di-(9Z-octadecenoyl)-sn-glycero-3-phosphocholine + H2O = 2-(9Z-octadecenoyl)-sn-glycero-3-phosphocholine + (9Z)-octadecenoate + H(+). The catalysed reaction is 1,2-dihexadecanoyl-sn-glycero-3-phosphocholine + H2O = hexadecanoyl-sn-glycero-3-phosphocholine + hexadecanoate + H(+). The enzyme catalyses 1,2-di-(9Z-octadecenoyl)-sn-glycero-3-phosphocholine + H2O = 1-(9Z-octadecenoyl)-sn-glycero-3-phosphocholine + (9Z)-octadecenoate + H(+). It carries out the reaction 1,2-di-(9Z-octadecenoyl)-sn-glycero-3-phosphoethanolamine + 1,2-dihexadecanoyl-sn-glycero-3-phosphocholine = hexadecanoyl-sn-glycero-3-phosphocholine + N-hexadecanoyl-1,2-di-(9Z-octadecenoyl)-sn-glycero-3-phosphoethanolamine + H(+). It catalyses the reaction 1,2-di-(9Z,12Z-octadecadienoyl)-sn-glycero-3-phosphocholine + H2O = 1-(9Z,12Z)-octadecadienoyl-sn-glycero-3-phosphocholine + (9Z,12Z)-octadecadienoate + H(+). Functionally, exhibits both phospholipase A1/2 and acyltransferase activities. Shows phospholipase A1 (PLA1) and A2 (PLA2), catalyzing the calcium-independent release of fatty acids from the sn-1 or sn-2 position of glycerophospholipids. For most substrates, PLA1 activity is much higher than PLA2 activity. Shows O-acyltransferase activity, catalyzing the transfer of a fatty acyl group from glycerophospholipid to the hydroxyl group of lysophospholipid. Shows N-acyltransferase activity,catalyzing the calcium-independent transfer of a fatty acyl group at the sn-1 position of phosphatidylcholine (PC) and other glycerophospholipids to the primary amine of phosphatidylethanolamine (PE), forming N-acylphosphatidylethanolamine (NAPE), which serves as precursor for N-acylethanolamines (NAEs). Exhibits high N-acyltransferase activity and low phospholipase A1/2 activity. Required for complete organelle rupture and degradation that occur during eye lens terminal differentiation, when fiber cells that compose the lens degrade all membrane-bound organelles in order to provide lens with transparency to allow the passage of light. Organelle membrane degradation is probably catalyzed by the phospholipase activity. (Microbial infection) Acts as a host factor for picornaviruses: required during early infection to promote viral genome release into the cytoplasm. The polypeptide is Phospholipase A and acyltransferase 3 (Mus musculus (Mouse)).